A 403-amino-acid polypeptide reads, in one-letter code: Putative F-box protein At5g41500 (403 aa).

Residues 2-47 (ATTISNLPRELIEEILSRVPLRAMKAMRLTCKSWNNLSKSESFMKM) enclose the F-box domain.

In Arabidopsis thaliana (Mouse-ear cress), this protein is Putative F-box protein At5g41500.